The chain runs to 288 residues: 4-diphosphocytidyl-2-C-methyl-D-erythritol kinase (288 aa).

The active site involves Lys11. Pro100 to Ser110 provides a ligand contact to ATP. The active site involves Asp140.

It belongs to the GHMP kinase family. IspE subfamily.

The enzyme catalyses 4-CDP-2-C-methyl-D-erythritol + ATP = 4-CDP-2-C-methyl-D-erythritol 2-phosphate + ADP + H(+). It functions in the pathway isoprenoid biosynthesis; isopentenyl diphosphate biosynthesis via DXP pathway; isopentenyl diphosphate from 1-deoxy-D-xylulose 5-phosphate: step 3/6. In terms of biological role, catalyzes the phosphorylation of the position 2 hydroxy group of 4-diphosphocytidyl-2C-methyl-D-erythritol. The polypeptide is 4-diphosphocytidyl-2-C-methyl-D-erythritol kinase (Wolbachia pipientis wMel).